The sequence spans 304 residues: tRNA dimethylallyltransferase (304 aa).

2–9 is a binding site for ATP; sequence GPTASGKT. Substrate is bound at residue 4 to 9; it reads TASGKT. Interaction with substrate tRNA regions lie at residues 27–30, 151–155, 232–237, and 265–272; these read DSAL, QRINR, RCVGYR, and KRQITWLR.

It belongs to the IPP transferase family. Monomer. Mg(2+) serves as cofactor.

The catalysed reaction is adenosine(37) in tRNA + dimethylallyl diphosphate = N(6)-dimethylallyladenosine(37) in tRNA + diphosphate. Catalyzes the transfer of a dimethylallyl group onto the adenine at position 37 in tRNAs that read codons beginning with uridine, leading to the formation of N6-(dimethylallyl)adenosine (i(6)A). The chain is tRNA dimethylallyltransferase from Actinobacillus pleuropneumoniae serotype 7 (strain AP76).